Consider the following 236-residue polypeptide: Ubiquinone biosynthesis O-methyltransferase (236 aa).

Positions 36, 60, 81, and 123 each coordinate S-adenosyl-L-methionine.

It belongs to the methyltransferase superfamily. UbiG/COQ3 family.

The enzyme catalyses a 3-demethylubiquinol + S-adenosyl-L-methionine = a ubiquinol + S-adenosyl-L-homocysteine + H(+). It carries out the reaction a 3-(all-trans-polyprenyl)benzene-1,2-diol + S-adenosyl-L-methionine = a 2-methoxy-6-(all-trans-polyprenyl)phenol + S-adenosyl-L-homocysteine + H(+). It functions in the pathway cofactor biosynthesis; ubiquinone biosynthesis. In terms of biological role, O-methyltransferase that catalyzes the 2 O-methylation steps in the ubiquinone biosynthetic pathway. This is Ubiquinone biosynthesis O-methyltransferase from Rickettsia canadensis (strain McKiel).